The following is a 152-amino-acid chain: UPF0266 membrane protein YobD (152 aa).

3 consecutive transmembrane segments (helical) span residues 6 to 26 (LVLI…QFIM), 45 to 65 (VDSV…VTSH), and 67 to 87 (AQMT…IFWI).

It belongs to the UPF0266 family.

The protein localises to the cell inner membrane. The protein is UPF0266 membrane protein YobD of Salmonella paratyphi B (strain ATCC BAA-1250 / SPB7).